We begin with the raw amino-acid sequence, 171 residues long: Adenine phosphoribosyltransferase (171 aa).

It belongs to the purine/pyrimidine phosphoribosyltransferase family. As to quaternary structure, homodimer.

It localises to the cytoplasm. The catalysed reaction is AMP + diphosphate = 5-phospho-alpha-D-ribose 1-diphosphate + adenine. Its pathway is purine metabolism; AMP biosynthesis via salvage pathway; AMP from adenine: step 1/1. In terms of biological role, catalyzes a salvage reaction resulting in the formation of AMP, that is energically less costly than de novo synthesis. The protein is Adenine phosphoribosyltransferase of Syntrophotalea carbinolica (strain DSM 2380 / NBRC 103641 / GraBd1) (Pelobacter carbinolicus).